Here is a 1603-residue protein sequence, read N- to C-terminus: Gag-Pol polyprotein (1603 aa).

Basic and acidic residues predominate over residues 128–141 (VGETTVQRDAKMAP). Residues 128–150 (VGETTVQRDAKMAPEETATPKTV) are disordered. The PPXY motif signature appears at 172-175 (PPPY). The LYPX(n)L motif signature appears at 180–184 (LYPSL). Residues 181–217 (YPSLAGVGEQQGQGGDTPPGAEQSRAEPGHAGQAPGP) are disordered. 3 involved in capsid protein dimerization regions span residues 217–259 (PALT…KLIT), 290–298 (HDVTNLMRV), and 351–362 (GMVGNPQGQAAL). Residues 219–229 (LTDWARVREEL) carry the Nuclear export signal motif. CCHC-type zinc fingers lie at residues 507–524 (GLCYTCGSPGHYQAQCPK) and 533–550 (ERCQLCNGMGHNAKQCRK). The Nuclear/nucleolar localization signal motif lies at 524–527 (KKRK). Positions 543-575 (HNAKQCRKRDGNQGQRPGKGLSSGPWPGPEPPA) are disordered. Residues 609-690 (ITALLDSGAD…VRGSILGRDC (82 aa)) form the Peptidase A2 domain. The active-site For protease activity; shared with dimeric partner is D614. The region spanning 750–938 (LQLGHIEPSL…PGVQYLGYKL (189 aa)) is the Reverse transcriptase domain. Mg(2+) is bound by residues D815, D890, D891, D1158, E1192, D1213, and D1272. Residues 1149–1280 (PVPGPTVFTD…ADSQATFQAY (132 aa)) enclose the RNase H type-1 domain. The segment at 1280-1321 (YPLREAKDLHTALHIGPRALSKACNISMQQAREVVQTCPHCN) adopts an Integrase-type zinc-finger fold. Residues H1289, H1293, C1317, and C1320 each coordinate Zn(2+). Positions 1333–1496 (RGLGPLQIWQ…TPIQKHWRPT (164 aa)) constitute an Integrase catalytic domain. Mg(2+) contacts are provided by D1344, D1401, and E1437. Residues 1502-1550 (PPVKIRIETGEWEKGWNVLVWGRGYAAVKNRDTDKVIWVPSRKVKPDIT) constitute a DNA-binding region (integrase-type). Positions 1548–1567 (DITQKDEVTKKDEASPLFAG) are involved in homooctamerization. Residues 1569–1603 (SDWIPWEDEQEGLQGETASNKQERPGEDTLAANES) form a disordered region.

In terms of assembly, active as a homodimer. Homodimer. Homomultimer. Homohexamer. As to quaternary structure, homodimer; further associates as a homooctamer. In terms of assembly, heterodimer of alpha and beta subunits. Three forms of RT exist: alpha-alpha (alpha-Pol), beta-beta (beta-Pol), and alpha-beta, with the major form being the heterodimer. Both the polymerase and RNase H active sites are located in the alpha subunit of heterodimeric RT alpha-beta. Mg(2+) serves as cofactor. It depends on Mn(2+) as a cofactor. Specific enzymatic cleavages in vivo yield mature proteins. Post-translationally, capsid protein p27: The cleavage at the C-terminus is slowly trimmed by the viral protease, sometimes being cut internally thereby generating the short version of the capsid protein and a capsid protein C-terminally extended by 3 amino acids in a ratio of 2:1.

The protein resides in the virion. It carries out the reaction DNA(n) + a 2'-deoxyribonucleoside 5'-triphosphate = DNA(n+1) + diphosphate. It catalyses the reaction Endonucleolytic cleavage to 5'-phosphomonoester.. Its function is as follows. Capsid protein p27: Self-associates to form the irregular polyhedron core composed of hexamers and pentamers, that encapsulates the genomic RNA-nucleocapsid complex. Assembles as a tube in vitro. Binds to inositol hexakisphosphate (IP6), which allows the assembly of the polyhedral capsid. In terms of biological role, plays a role in the oligomerization of the Gag polyprotein and in the stabilization of the immature particle. Essential layering element during tube assembly. Allows the cooperative binging of Gag to the host plasma membrane. Functionally, binds strongly to viral nucleic acids and promotes their packaging. Plays a role in the maturation-stabilization of the viral dimeric RNA via highly structured zinc-binding motifs. The aspartyl protease mediates proteolytic cleavages of Gag and Gag-Pol polyproteins during or shortly after the release of the virion from the plasma membrane. Cleavages take place as an ordered, step-wise cascade to yield mature proteins. This process is called maturation. Displays maximal activity during the budding process just prior to particle release from the cell. Its function is as follows. Catalyzes viral DNA integration into the host chromosome, by performing a series of DNA cutting and joining reactions. This recombination event is an essential step in the viral replication cycle. Has a strong preference for using the 3'-OH at the viral DNA end as a nucleophile. The chain is Gag-Pol polyprotein (gag-pol) from Gallus gallus (Chicken).